A 332-amino-acid chain; its full sequence is 2,3-diketo-L-gulonate reductase (332 aa).

Histidine 44 (proton donor) is an active-site residue. Residues 168 to 174, 224 to 225, and 304 to 306 contribute to the NAD(+) site; these read ITMVDMS, WK, and GHE.

This sequence belongs to the LDH2/MDH2 oxidoreductase family. DlgD subfamily. As to quaternary structure, homodimer.

It localises to the cytoplasm. The enzyme catalyses 3-dehydro-L-gulonate + NAD(+) = 2,3-dioxo-L-gulonate + NADH + H(+). The catalysed reaction is 3-dehydro-L-gulonate + NADP(+) = 2,3-dioxo-L-gulonate + NADPH + H(+). Functionally, catalyzes the reduction of 2,3-diketo-L-gulonate in the presence of NADH, to form 3-keto-L-gulonate. The protein is 2,3-diketo-L-gulonate reductase of Escherichia fergusonii (strain ATCC 35469 / DSM 13698 / CCUG 18766 / IAM 14443 / JCM 21226 / LMG 7866 / NBRC 102419 / NCTC 12128 / CDC 0568-73).